Consider the following 556-residue polypeptide: PPE family protein PPE2 (556 aa).

The segment at 8–164 (ASPPEVHSAL…ASYQAVSTAA (157 aa)) is PPE. An SH3-like region spans residues 201-256 (QKIGYTDFYNNVIQPFINWLTNLPFLQAMFSGFDPWLPSLGNPLTFLSPANIAFAL). A leucine zipper motif region spans residues 319 to 340 (LEQTLALLPAALPLLAAPLAPL). Disordered stretches follow at residues 385–418 (TPTP…PPVT) and 443–556 (GTGV…TRVE). The segment covering 400–417 (PTPPPGPPPPPVTAPPPV) has biased composition (pro residues). Positions 456 to 471 (AEAPAAAAAPEEQVQP) are enriched in low complexity. A compositionally biased stretch (basic residues) spans 472-481 (QRRRRPKIKQ). The Nuclear localization signal motif lies at 473 to 481 (RRRRPKIKQ).

It belongs to the mycobacterial PPE family.

The protein localises to the secreted. The protein resides in the host cytoplasm. Its subcellular location is the host nucleus. Functionally, inhibits nitric oxide (NO) production in activated macrophages. Acts by inhibiting expression of the host inducible nitric oxide synthase (iNOS). PPE2 is translocated into the host macrophage nucleus, where it interacts with a GATA-binding site overlapping with the TATA box of NOS2 (iNOS) promoter, and strongly inhibits NOS2 gene transcription. Reduction in NO production in turn facilitates intracellular survival of the bacilli inside the macrophage. In addition, disrupts the assembly of NADPH oxidase complex, which inhibits NADPH oxidase-mediated reactive oxygen species (ROS) generation in macrophages and favors M.tuberculosis survival. Acts by interacting with NCF2, the cytosolic subunit of NADPH oxidase, and preventing translocation of NCF2 and NCF1 to the membrane, which causes a reduction of the functional assembly of NADPH oxidase complex and a decrease in NADPH oxidase activity. This is PPE family protein PPE2 (PPE2) from Mycobacterium tuberculosis (strain ATCC 25618 / H37Rv).